A 174-amino-acid chain; its full sequence is Ribosome maturation factor RimM (174 aa).

A PRC barrel domain is found at 97 to 173; that stretch reads GNKFYFHEVI…DLPVGLVEMY (77 aa).

Belongs to the RimM family. As to quaternary structure, binds ribosomal protein uS19.

The protein resides in the cytoplasm. Functionally, an accessory protein needed during the final step in the assembly of 30S ribosomal subunit, possibly for assembly of the head region. Essential for efficient processing of 16S rRNA. May be needed both before and after RbfA during the maturation of 16S rRNA. It has affinity for free ribosomal 30S subunits but not for 70S ribosomes. The protein is Ribosome maturation factor RimM of Flavobacterium johnsoniae (strain ATCC 17061 / DSM 2064 / JCM 8514 / BCRC 14874 / CCUG 350202 / NBRC 14942 / NCIMB 11054 / UW101) (Cytophaga johnsonae).